The primary structure comprises 31 residues: Kalata-B9 (31 aa).

Positions 1–31 form a cross-link, cyclopeptide (Gly-Asp); sequence GSVFNCGETCVLGTCYTPGCTCNTYRVCTKD. 3 cysteine pairs are disulfide-bonded: C6–C20, C10–C22, and C15–C28.

This sequence belongs to the cyclotide family. Bracelet subfamily. Post-translationally, this peptide occurs in both cyclic and linear forms.

In terms of biological role, probably participates in a plant defense mechanism. This chain is Kalata-B9, found in Oldenlandia affinis.